A 1107-amino-acid polypeptide reads, in one-letter code: Dynein axonemal assembly factor 1 homolog (1107 aa).

LRR repeat units follow at residues His-34–Val-56, Gly-57–Thr-78, Glu-79–Lys-100, Gln-101–Ile-122, Val-125–Arg-146, and Phe-150–Gly-171. The LRRCT domain occupies Asn-184–Trp-223. 6 disordered regions span residues His-258–Lys-281, Asn-428–Val-487, Glu-500–Glu-608, Lys-780–Gln-810, Ser-834–Asp-855, and Ala-1070–Asp-1107. Polar residues predominate over residues Asn-428 to Phe-437. The span at Glu-446–Ile-459 shows a compositional bias: acidic residues. Over residues Glu-500 to Ser-512 the composition is skewed to basic and acidic residues. Residues Asp-531–Asp-544 are compositionally biased toward acidic residues. Over residues Ser-549–Ser-560 the composition is skewed to low complexity. A compositionally biased stretch (polar residues) spans Asn-581–Ser-597. Basic and acidic residues predominate over residues Leu-801 to Gln-810. The segment covering Asp-844 to Asp-855 has biased composition (acidic residues). Basic and acidic residues predominate over residues Val-1083–Thr-1097. Positions Val-1098–Asp-1107 are enriched in acidic residues.

This sequence belongs to the DNAAF1 family.

The protein resides in the cell projection. It is found in the cilium. Cilium-specific protein required for cilia structures. The chain is Dynein axonemal assembly factor 1 homolog from Aedes aegypti (Yellowfever mosquito).